The following is a 216-amino-acid chain: MVVIGEKFPEVEVKTTHGVIKLPDHFTKQGKWFILFSHPADFTPVCTTEFYGMQKRLEEFRKLGVEPIGLSVDQVFAHIKWMEWIKENLGVEIEFPIIADDRGELAEKLGMIPSGATITARAVFIVDDKGIIRAIVYYPAEVGRDWDEILRLVKALKISTENGVALPHKWPNNELIGDKVIIPPASTVEEKKQREEAKAKGEIECYDWWFCYKKLK.

The region spanning 2 to 158 is the Thioredoxin domain; the sequence is VVIGEKFPEV…ILRLVKALKI (157 aa). The active-site Cysteine sulfenic acid (-SOH) intermediate is the C46. A substrate-binding site is contributed by R121. The cysteines at positions 205 and 211 are disulfide-linked.

It belongs to the peroxiredoxin family. Prx6 subfamily. As to quaternary structure, homodecamer. Pentamer of dimers that assemble into a ring structure.

The protein resides in the cytoplasm. The catalysed reaction is a hydroperoxide + [thioredoxin]-dithiol = an alcohol + [thioredoxin]-disulfide + H2O. In terms of biological role, thiol-specific peroxidase that catalyzes the reduction of hydrogen peroxide and organic hydroperoxides to water and alcohols, respectively. Plays a role in cell protection against oxidative stress by detoxifying peroxides. The sequence is that of Peroxiredoxin from Pyrococcus abyssi (strain GE5 / Orsay).